The primary structure comprises 117 residues: Large ribosomal subunit protein bL19 (117 aa).

The protein belongs to the bacterial ribosomal protein bL19 family.

Functionally, this protein is located at the 30S-50S ribosomal subunit interface and may play a role in the structure and function of the aminoacyl-tRNA binding site. This Vibrio vulnificus (strain CMCP6) protein is Large ribosomal subunit protein bL19.